The sequence spans 103 residues: Large ribosomal subunit protein bL21 (103 aa).

It belongs to the bacterial ribosomal protein bL21 family. As to quaternary structure, part of the 50S ribosomal subunit. Contacts protein L20.

This protein binds to 23S rRNA in the presence of protein L20. This is Large ribosomal subunit protein bL21 from Escherichia coli O127:H6 (strain E2348/69 / EPEC).